The chain runs to 586 residues: Frizzled-10-A (586 aa).

A signal peptide spans 1–26 (MDVSGVTGLLRGTALLLVLAAALCSA). At 27–230 (ISSINPDRSG…DVYWSKDDKK (204 aa)) the chain is on the extracellular side. In terms of domain architecture, FZ spans 35–156 (SGDGRCQAIE…NDPNYLCMEA (122 aa)). Disulfide bonds link Cys-40–Cys-101, Cys-48–Cys-94, Cys-85–Cys-123, Cys-112–Cys-153, and Cys-116–Cys-140. A glycan (N-linked (GlcNAc...) asparagine) is linked at Asn-54. Asn-159 carries N-linked (GlcNAc...) asparagine glycosylation. The disordered stretch occupies residues 161–199 (TDETPRGSSMLPPIFRPQRPSSGHEIYPKDPTSRSSCEN). The helical transmembrane segment at 231 to 251 (FAFIWIAIWSILCFFSSAFTV) threads the bilayer. Residues 252–267 (LTFLVDPLRFKYPERP) lie on the Cytoplasmic side of the membrane. A helical transmembrane segment spans residues 268–288 (IIFLSMCYCVYSVGYIIRLFA). Topologically, residues 289-315 (GADSIACDRDSGQLYVIQEGLESTGCT) are extracellular. The helical transmembrane segment at 316-336 (IVFLILYYFGMASSLWWVILT) threads the bilayer. Topologically, residues 337-356 (LTWFLAAGKKWGHEAIEANS) are cytoplasmic. Residues 357 to 377 (SYFHLAAWAIPAVKTIMILVM) traverse the membrane as a helical segment. Residues 378–401 (RRVAGDELTGVCYVGSMDVNALTG) lie on the Extracellular side of the membrane. Residues 402-422 (FVLIPLACYLIIGTSFILSGF) traverse the membrane as a helical segment. Topologically, residues 423-448 (VALFHIRRVMKTGGENTDKLEKLMVR) are cytoplasmic. A helical membrane pass occupies residues 449-469 (IGVFSVLYTVPATCVIACYFY). At 470–507 (ERLNMDFWKILATQDKCKMDSQTKTLDCTMTSSIPAVE) the chain is on the extracellular side. The chain crosses the membrane as a helical span at residues 508–528 (IFMVKIFMLLVVGITSGMWIW). Topologically, residues 529–586 (TSKTVQSWQNVFSKRLKKRNRSKPASVITSAGIYKKPQHPPKVHHGKYESALQSPTCV) are cytoplasmic. The Lys-Thr-X-X-X-Trp motif, mediates interaction with the PDZ domain of Dvl family members signature appears at 531–536 (KTVQSW). A disordered region spans residues 563-586 (KKPQHPPKVHHGKYESALQSPTCV). The segment covering 564-573 (KPQHPPKVHH) has biased composition (basic residues). The short motif at 584–586 (TCV) is the PDZ-binding element.

This sequence belongs to the G-protein coupled receptor Fz/Smo family. As to expression, expressed in liver, lung, brain, testis, stomach, kidney, eye, skeletal muscle and skin.

It is found in the cell membrane. Its function is as follows. Receptor for Wnt proteins. Most of frizzled receptors are coupled to the beta-catenin canonical signaling pathway, which leads to the activation of disheveled proteins, inhibition of GSK-3 kinase, nuclear accumulation of beta-catenin and activation of Wnt target genes. A second signaling pathway involving PKC and calcium fluxes has been seen for some family members, but it is not yet clear if it represents a distinct pathway or if it can be integrated in the canonical pathway, as PKC seems to be required for Wnt-mediated inactivation of GSK-3 kinase. Both pathways seem to involve interactions with G-proteins. May be involved in transduction and intercellular transmission of polarity information during tissue morphogenesis and/or in differentiated tissues. Activated by Wnt8. Could have an antagonizing activity in the morphogenesis during development. This Xenopus laevis (African clawed frog) protein is Frizzled-10-A (fzd10-a).